The chain runs to 104 residues: MKECVVWTVNLDSKKSRAEGRRIPRRFAVPNVKLHELVEACKELGLKFRAEEKKYPKSWWEEGGRVVVEKRGTKTKLMIELARKIAEIREQKREQKKDKKKKKK.

This sequence belongs to the SRP19 family. Part of the signal recognition particle protein translocation system, which is composed of SRP and FtsY. Archaeal SRP consists of a 7S RNA molecule of 300 nucleotides and two protein subunits: SRP54 and SRP19.

Its subcellular location is the cytoplasm. Functionally, involved in targeting and insertion of nascent membrane proteins into the cytoplasmic membrane. Binds directly to 7S RNA and mediates binding of the 54 kDa subunit of the SRP. The polypeptide is Signal recognition particle 19 kDa protein (Archaeoglobus fulgidus (strain ATCC 49558 / DSM 4304 / JCM 9628 / NBRC 100126 / VC-16)).